A 337-amino-acid chain; its full sequence is Transaldolase (337 aa).

A Nuclear localization signal motif is present at residues 1–10; it reads MSGSPVKRQR. Lys115 is modified (N6-acetyllysine). Lys142 (schiff-base intermediate with substrate) is an active-site residue. Position 219 is an N6-acetyllysine (Lys219). Ser237 and Ser256 each carry phosphoserine. N6-acetyllysine occurs at positions 269, 286, and 321.

The protein belongs to the transaldolase family. Type 1 subfamily. In terms of assembly, homodimer. Interacts with KPNA1 and KPNA4.

The protein localises to the nucleus. Its subcellular location is the cytoplasm. It catalyses the reaction D-sedoheptulose 7-phosphate + D-glyceraldehyde 3-phosphate = D-erythrose 4-phosphate + beta-D-fructose 6-phosphate. It functions in the pathway carbohydrate degradation; pentose phosphate pathway; D-glyceraldehyde 3-phosphate and beta-D-fructose 6-phosphate from D-ribose 5-phosphate and D-xylulose 5-phosphate (non-oxidative stage): step 2/3. Its function is as follows. Catalyzes the rate-limiting step of the non-oxidative phase in the pentose phosphate pathway. Catalyzes the reversible conversion of sedheptulose-7-phosphate and D-glyceraldehyde 3-phosphate into erythrose-4-phosphate and beta-D-fructose 6-phosphate. This chain is Transaldolase (Taldo1), found in Rattus norvegicus (Rat).